A 209-amino-acid chain; its full sequence is Ribosomal RNA large subunit methyltransferase E (209 aa).

Positions 63, 65, 83, 99, and 124 each coordinate S-adenosyl-L-methionine. Lys-164 serves as the catalytic Proton acceptor.

This sequence belongs to the class I-like SAM-binding methyltransferase superfamily. RNA methyltransferase RlmE family.

It is found in the cytoplasm. The catalysed reaction is uridine(2552) in 23S rRNA + S-adenosyl-L-methionine = 2'-O-methyluridine(2552) in 23S rRNA + S-adenosyl-L-homocysteine + H(+). Functionally, specifically methylates the uridine in position 2552 of 23S rRNA at the 2'-O position of the ribose in the fully assembled 50S ribosomal subunit. The protein is Ribosomal RNA large subunit methyltransferase E of Shewanella halifaxensis (strain HAW-EB4).